A 158-amino-acid polypeptide reads, in one-letter code: Phosphopantetheine adenylyltransferase (158 aa).

A substrate-binding site is contributed by Ser9. Residues 9–10 and His17 each bind ATP; that span reads SF. Substrate-binding residues include Lys41, Thr73, and Arg87. ATP contacts are provided by residues 88–90, Glu98, and 122–128; these read GLR and NQNISSS.

It belongs to the bacterial CoaD family. Homohexamer. Mg(2+) serves as cofactor.

It is found in the cytoplasm. The enzyme catalyses (R)-4'-phosphopantetheine + ATP + H(+) = 3'-dephospho-CoA + diphosphate. It functions in the pathway cofactor biosynthesis; coenzyme A biosynthesis; CoA from (R)-pantothenate: step 4/5. Functionally, reversibly transfers an adenylyl group from ATP to 4'-phosphopantetheine, yielding dephospho-CoA (dPCoA) and pyrophosphate. The sequence is that of Phosphopantetheine adenylyltransferase from Leuconostoc citreum (strain KM20).